Consider the following 479-residue polypeptide: Solute carrier family 7 member 13 (479 aa).

The Cytoplasmic segment spans residues 1–14 (MAMDIEKKIYLKRQ). Residues 15 to 35 (LGYFWGTNFLIINIIGAGIFV) traverse the membrane as a helical segment. The Extracellular portion of the chain corresponds to 36-47 (SPKGVLQYSSMN). A helical membrane pass occupies residues 48-68 (VGVSLCVWVFCAVLSMTSTLC). Residues 69–89 (AAEIGITFPYTVAHYYFLKRC) lie on the Cytoplasmic side of the membrane. The chain crosses the membrane as a helical span at residues 90-110 (FGPFVAFLRLWTSLFTGPGVL). Topologically, residues 111 to 129 (ASQALLLAEYGIQPFYPSC) are extracellular. A helical transmembrane segment spans residues 130–150 (SAPAVPKKCLALAMLWIVGIL). Over 151 to 165 (NSRGVKELSWLQTVS) the chain is Cytoplasmic. Residues 166 to 186 (MVLKMGILSFISLSGLFLLVT) traverse the membrane as a helical segment. The Extracellular portion of the chain corresponds to 187-208 (GRKENVRRLQNAFDAEFPEVSR). A helical membrane pass occupies residues 209–229 (LIEAIFQGYFAFSGGGSFTYV). Residues 230 to 242 (AGELKEPSKTIPR) are Cytoplasmic-facing. A helical membrane pass occupies residues 243 to 263 (CIFTALPLVTVVYLLANLSYL). Topologically, residues 264 to 289 (TVLSPQELLSSDAVALTWTDRVIPQL) are extracellular. Residues 290–310 (TWSVPFAISASLFSNLVTSVF) form a helical membrane-spanning segment. Residues 311–338 (ETSRTSYIASRNGQLPLLCSTLNVHSSP) lie on the Cytoplasmic side of the membrane. Residues 339-359 (FIAVLLDVSMGSIAIVLTNLI) traverse the membrane as a helical segment. Position 360 (glutamate 360) is a topological domain, extracellular. A helical membrane pass occupies residues 361–381 (LINYLFFVFSIWTVLSVIGIL). Over 382–396 (KLRYQEPNLHRPYKV) the chain is Cytoplasmic. A helical transmembrane segment spans residues 397–417 (FSPFLFITAAISLSMVLIPLI). Over 418-423 (KSPKMQ) the chain is Extracellular. Residues 424 to 444 (YIYVFLFFLGGLLFYVPLIHF) traverse the membrane as a helical segment. The Cytoplasmic portion of the chain corresponds to 445 to 479 (KLKLIWFQKLTCYLQLLFNICIPDVSDEHVAEEES).

This sequence belongs to the amino acid-polyamine-organocation (APC) superfamily. As to quaternary structure, disulfide-linked heterodimer composed of the catalytic light subunit SLC7A13 and the heavy subunit SLC3A1.

It localises to the apical cell membrane. It catalyses the reaction L-cystine(out) + L-aspartate(in) = L-cystine(in) + L-aspartate(out). The catalysed reaction is L-cystine(out) = L-cystine(in). It carries out the reaction L-aspartate(in) + L-glutamate(out) = L-aspartate(out) + L-glutamate(in). The enzyme catalyses L-aspartate(in) + L-glutamine(out) = L-aspartate(out) + L-glutamine(in). It catalyses the reaction L-aspartate(in) + L-methionine(out) = L-aspartate(out) + L-methionine(in). The catalysed reaction is L-leucine(out) + L-aspartate(in) = L-leucine(in) + L-aspartate(out). It carries out the reaction L-valine(out) + L-aspartate(in) = L-valine(in) + L-aspartate(out). The enzyme catalyses L-aspartate(in) + L-phenylalanine(out) = L-aspartate(out) + L-phenylalanine(in). It catalyses the reaction L-tyrosine(out) + L-aspartate(in) = L-tyrosine(in) + L-aspartate(out). The catalysed reaction is L-tryptophan(out) + L-aspartate(in) = L-tryptophan(in) + L-aspartate(out). Its function is as follows. Associates with SLC3A1/rBAT to form a functional heterodimeric complex that transports anionic and neutral amino acids across the apical plasma membrane of renal epithelium. Preferentially mediates exchange transport, but can also operate via facilitated diffusion. May act as a major transporter for L-cystine in late proximal tubules, ensuring its reabsorption from the luminal fluid in exchange for cytosolic L-glutamate or L-aspartate. The protein is Solute carrier family 7 member 13 (Slc7a13) of Rattus norvegicus (Rat).